Here is a 414-residue protein sequence, read N- to C-terminus: MPGKSRIIFHIDMNSFYASVEMAYDPALRGKPVAVAGNVKERKGIVVTCSYEARARGVKTTMPVWQAKRHCPELIVLPPNFDRYRNSSRAMFTILREYTDLVEPVSIDEGYMDMTDTPYSSRALETAKEIQSRLQKELLLPSSIGIAPNKFLAKMASDMKKPLGITILRKRQVPDILWPLPVGEMHGVGKKTAEKLKGLGIHTIGELAAADEHSLKRLLGINGPRLKNKANGIHHAPVDPERIYEFKSVGNSSTLSHDSSDEEELLGVFRKLAASVSDRLQRKEVMASKLFIMIRYADWRTITRSTTLRNPIDQKNDILKEAEHLFFKHWNKNPVRLLGITGTDLVEKEQAYKQLDLFSFNEDAKDEPIQQMMEKLNKKYGTKLIRKGATLKKEESKTKGTSFNKDFFQDEKKS.

A UmuC domain is found at I8 to G189. Mg(2+)-binding residues include D12 and D108. The active site involves E109. The segment at L391–S414 is disordered.

This sequence belongs to the DNA polymerase type-Y family. In terms of assembly, monomer. Requires Mg(2+) as cofactor.

The protein localises to the cytoplasm. The catalysed reaction is DNA(n) + a 2'-deoxyribonucleoside 5'-triphosphate = DNA(n+1) + diphosphate. Its function is as follows. Poorly processive, error-prone DNA polymerase involved in untargeted mutagenesis. Copies undamaged DNA at stalled replication forks, which arise in vivo from mismatched or misaligned primer ends. These misaligned primers can be extended by PolIV. Exhibits no 3'-5' exonuclease (proofreading) activity. May be involved in translesion synthesis (TSL), in conjunction with the beta clamp from PolIII. This chain is DNA polymerase IV 1 (dinB1), found in Bacillus subtilis (strain 168).